Here is a 1816-residue protein sequence, read N- to C-terminus: Laminin subunit alpha-4 (1816 aa).

Residues 1-24 (MGWSTAWCSVLALWLLWCAVCSNA) form the signal peptide. Residue serine 39 is glycosylated (O-linked (Xyl...) (chondroitin sulfate) serine). 12 disulfide bridges follow: cysteine 82–cysteine 91, cysteine 84–cysteine 98, cysteine 101–cysteine 110, cysteine 113–cysteine 129, cysteine 132–cysteine 146, cysteine 134–cysteine 155, cysteine 157–cysteine 166, cysteine 169–cysteine 184, cysteine 187–cysteine 202, cysteine 189–cysteine 209, cysteine 212–cysteine 221, and cysteine 224–cysteine 238. 3 Laminin EGF-like domains span residues 82–131 (CDCN…FCQP), 132–186 (CPCP…TCKK), and 187–240 (CDCS…NCAV). Residue asparagine 104 is glycosylated (N-linked (GlcNAc...) asparagine). N-linked (GlcNAc...) asparagine glycosylation is present at asparagine 215. One can recognise a Laminin EGF-like 4; truncated domain in the interval 241-255 (CNCGGGPCDSVTGEC). Residues 256-825 (LEEGFEVPTG…AQTRSVASKI (570 aa)) form a domain II and I region. Asparagine 308, asparagine 333, asparagine 458, asparagine 550, asparagine 571, asparagine 574, asparagine 631, and asparagine 639 each carry an N-linked (GlcNAc...) asparagine glycan. The stretch at 431 to 523 (THRELVDEEA…ERVKEQMEVV (93 aa)) forms a coiled coil. Residues 556–604 (AEIDGAKNELQGKLSNLSNLSHDLVQEATDHAYNLQQEADELSRNLHSS) are a coiled coil. A coiled-coil region spans residues 655–717 (IIYHKDESDN…AVKQLQAAER (63 aa)). Residues 717 to 719 (RGD) carry the Cell attachment site motif. Asparagine 735, asparagine 751, asparagine 754, asparagine 780, and asparagine 803 each carry an N-linked (GlcNAc...) asparagine glycan. Residues 770 to 799 (AVDSARDAVRNLTEVVPQLLDQLRTVEQKR) are a coiled coil. Laminin G-like domains are found at residues 826 to 1030 (QVSM…SVPC), 1042 to 1222 (AASY…GYGC), and 1229 to 1397 (SRRA…LYEC). Cysteine 1000 and cysteine 1030 are joined by a disulfide. Residue asparagine 1088 is glycosylated (N-linked (GlcNAc...) asparagine). Residues cysteine 1196 and cysteine 1222 are joined by a disulfide bond. N-linked (GlcNAc...) asparagine glycans are attached at residues asparagine 1283 and asparagine 1361. Cysteine 1365 and cysteine 1397 form a disulfide bridge. The segment covering 1409–1419 (KKGKNSSKPKT) has biased composition (basic residues). Residues 1409–1433 (KKGKNSSKPKTNKQGEKSKDAPSWD) are disordered. Basic and acidic residues predominate over residues 1421–1430 (KQGEKSKDAP). 2 consecutive Laminin G-like domains span residues 1462–1633 (AYQY…VTPC) and 1640–1813 (TGTY…INSC). Disulfide bonds link cysteine 1610-cysteine 1633 and cysteine 1785-cysteine 1813.

Laminin is a complex glycoprotein, consisting of three different polypeptide chains (alpha, beta, gamma), which are bound to each other by disulfide bonds into a cross-shaped molecule comprising one long and three short arms with globules at each end. Alpha-4 is a subunit of laminin-8 (laminin-411), laminin-9 (laminin-421) and laminin-14 (laminin-423). In terms of tissue distribution, strongly expressed in peripheral nerves, cardiac muscle, fat, dermis, lung stroma, aortic endothelium, endocardium and endothelium of blood vessels in skin and brain.

Its subcellular location is the secreted. The protein localises to the extracellular space. The protein resides in the extracellular matrix. It localises to the basement membrane. Functionally, binding to cells via a high affinity receptor, laminin is thought to mediate the attachment, migration and organization of cells into tissues during embryonic development by interacting with other extracellular matrix components. The polypeptide is Laminin subunit alpha-4 (Lama4) (Mus musculus (Mouse)).